A 103-amino-acid chain; its full sequence is Small ribosomal subunit protein uS10 (103 aa).

The protein belongs to the universal ribosomal protein uS10 family. Part of the 30S ribosomal subunit.

Its function is as follows. Involved in the binding of tRNA to the ribosomes. This chain is Small ribosomal subunit protein uS10, found in Psychromonas ingrahamii (strain DSM 17664 / CCUG 51855 / 37).